The primary structure comprises 80 residues: Dermaseptin-A5 (80 aa).

The N-terminal stretch at 1-22 (MAFLKKSLFLVLFLGLVSLSIC) is a signal peptide. Positions 23-43 (EEEKRENEDEEEQEDDEQSEM) are excised as a propeptide. A disordered region spans residues 24 to 45 (EEKRENEDEEEQEDDEQSEMKR). Residues 30–40 (EDEEEQEDDEQ) show a composition bias toward acidic residues. Residue Val-77 is modified to Valine amide. A propeptide spanning residues 79–80 (EQ) is cleaved from the precursor.

Belongs to the frog skin active peptide (FSAP) family. Dermaseptin subfamily. As to expression, expressed by the skin glands.

It is found in the secreted. Functionally, possesses a potent antimicrobial activity against Gram-positive and Gram-negative bacteria. Probably acts by disturbing membrane functions with its amphipathic structure. This chain is Dermaseptin-A5, found in Agalychnis annae (Blue-sided leaf frog).